Here is a 147-residue protein sequence, read N- to C-terminus: Nucleoside diphosphate kinase (147 aa).

Positions 9, 57, 85, 91, 102, and 112 each coordinate ATP. Histidine 115 (pros-phosphohistidine intermediate) is an active-site residue.

The protein belongs to the NDK family. In terms of assembly, homotetramer. It depends on Mg(2+) as a cofactor.

The protein localises to the cytoplasm. The enzyme catalyses a 2'-deoxyribonucleoside 5'-diphosphate + ATP = a 2'-deoxyribonucleoside 5'-triphosphate + ADP. It carries out the reaction a ribonucleoside 5'-diphosphate + ATP = a ribonucleoside 5'-triphosphate + ADP. Functionally, major role in the synthesis of nucleoside triphosphates other than ATP. The ATP gamma phosphate is transferred to the NDP beta phosphate via a ping-pong mechanism, using a phosphorylated active-site intermediate. The chain is Nucleoside diphosphate kinase from Listeria monocytogenes serotype 4b (strain CLIP80459).